The following is a 282-amino-acid chain: Shikimate dehydrogenase (NADP(+)) (282 aa).

Residues 15-17 (SKS) and T62 each bind shikimate. The active-site Proton acceptor is the K66. 2 residues coordinate shikimate: N87 and D103. Residues 127–131 (GAGGA), 151–156 (NRTHTK), and M220 each bind NADP(+). Y222 contributes to the shikimate binding site. Residue G244 participates in NADP(+) binding.

Belongs to the shikimate dehydrogenase family. As to quaternary structure, homodimer.

The enzyme catalyses shikimate + NADP(+) = 3-dehydroshikimate + NADPH + H(+). It participates in metabolic intermediate biosynthesis; chorismate biosynthesis; chorismate from D-erythrose 4-phosphate and phosphoenolpyruvate: step 4/7. Functionally, involved in the biosynthesis of the chorismate, which leads to the biosynthesis of aromatic amino acids. Catalyzes the reversible NADPH linked reduction of 3-dehydroshikimate (DHSA) to yield shikimate (SA). This chain is Shikimate dehydrogenase (NADP(+)), found in Shewanella baltica (strain OS155 / ATCC BAA-1091).